Reading from the N-terminus, the 284-residue chain is Protein phosphatase 1 regulatory subunit 3B (284 aa).

The short motif at 61-64 (RVSF) is the PP1-binding motif element. Positions 124–232 (RNRLQTDHVC…SNKGKNYRII (109 aa)) constitute a CBM21 domain. Ser260 bears the Phosphoserine mark.

In terms of assembly, interacts with glycogen, PPP1CC catalytic subunit of PP1 and PYGL. Associates with glycogen particles. Forms complexes with debranching enzyme, glycogen phosphorylase, glycogen synthase and phosphorylase kinase which is necessary for its regulation of PP1 activity.

Acts as a glycogen-targeting subunit for phosphatase PP1. Facilitates interaction of the PP1 with enzymes of the glycogen metabolism and regulates its activity. Suppresses the rate at which PP1 dephosphorylates (inactivates) glycogen phosphorylase and enhances the rate at which it activates glycogen synthase and therefore limits glycogen breakdown. Its activity is inhibited by PYGL, resulting in inhibition of the glycogen synthase and glycogen phosphorylase phosphatase activities of PP1. Dramatically increases basal and insulin-stimulated glycogen synthesis upon overexpression in hepatocytes. This is Protein phosphatase 1 regulatory subunit 3B (PPP1R3B) from Bos taurus (Bovine).